The chain runs to 205 residues: MLLIIQNGYITPYIYRYLDEDYEIIKSFNVDVTTMDLDKYSVVIILGGYQSVVDINKYSYLLKVIELIKKCLTVKKPLFGICLGFQLIAYALGCEIKSSGKLNVGYDTTILGYDNVFRCHIDYIIPNDSVEVLEYFDNMPYLYKHDNHVYGIQCHPDIAPECIKKYSNHIESYDYAAANKDSINKTNAIIIKYILNLLRDSIKKD.

The Glutamine amidotransferase type-1 domain maps to 1–176; that stretch reads MLLIIQNGYI…SNHIESYDYA (176 aa). Residues cysteine 82, histidine 155, and aspartate 157 each act as for GATase activity in the active site.

The polypeptide is Putative glutamine amidotransferase-like protein L716 (Acanthamoeba polyphaga mimivirus (APMV)).